Consider the following 308-residue polypeptide: MPYTKKDLISMKDLSKDDIFDILRLALKFKELNKSPVKKADSLRGKTVINAFFENSTRTRTSFEIAAKRLGADAINFSSSVSSTKKGESLIDTIKNMEAMKTDIFVVRHASSGTAKFIADNASASVVNAGDGLNEHPTQCLLDLLTIYENKGRLENLNVAIIGDIFRSRVARSNVWAMKTLGINVKLFGPPMMTRDCEAFGVPLCSNIDEAVENSDVIIMLRIQLERQDGEPEFPSVREYSKFFGLTAKRMELAKKDVIIMHPGPINRGVEINSDVADDPKFTKILNQVENGVAVRMAVLDTLIKNRS.

Carbamoyl phosphate is bound by residues Arg-58 and Thr-59. Residue Lys-86 coordinates L-aspartate. Residues Arg-108, His-136, and Gln-139 each coordinate carbamoyl phosphate. L-aspartate contacts are provided by Arg-169 and Arg-222. Carbamoyl phosphate-binding residues include Gly-264 and Pro-265.

The protein belongs to the aspartate/ornithine carbamoyltransferase superfamily. ATCase family. Heterododecamer (2C3:3R2) of six catalytic PyrB chains organized as two trimers (C3), and six regulatory PyrI chains organized as three dimers (R2).

The catalysed reaction is carbamoyl phosphate + L-aspartate = N-carbamoyl-L-aspartate + phosphate + H(+). The protein operates within pyrimidine metabolism; UMP biosynthesis via de novo pathway; (S)-dihydroorotate from bicarbonate: step 2/3. Functionally, catalyzes the condensation of carbamoyl phosphate and aspartate to form carbamoyl aspartate and inorganic phosphate, the committed step in the de novo pyrimidine nucleotide biosynthesis pathway. The sequence is that of Aspartate carbamoyltransferase catalytic subunit from Campylobacter hominis (strain ATCC BAA-381 / DSM 21671 / CCUG 45161 / LMG 19568 / NCTC 13146 / CH001A).